A 137-amino-acid polypeptide reads, in one-letter code: Envelope glycoprotein L (137 aa).

An N-terminal signal peptide occupies residues 1–25 (MRAVGVFLATCLVTIFVLPTWGNWA). The tract at residues 23-128 (NWAYPCCHVT…SVEDLFGANL (106 aa)) is interaction with gH. 2 cysteine pairs are disulfide-bonded: C28/C56 and C29/C79.

This sequence belongs to the herpesviridae glycoprotein L family. In terms of assembly, interacts with glycoprotein H (gH); this interaction is necessary for the correct processing and cell surface expression of gH. The heterodimer gH/gL seems to interact with gB trimers during fusion. The heterodimer gH/gL interacts with host EPHA2 to facilitate virus internalization and fusion.

The protein localises to the virion membrane. The protein resides in the host cell membrane. It is found in the host Golgi apparatus. Its subcellular location is the host trans-Golgi network. Its function is as follows. The heterodimer glycoprotein H-glycoprotein L is required for the fusion of viral and plasma membranes leading to virus entry into the host cell. Acts as a functional inhibitor of gH and maintains gH in an inhibited form. Upon binding to host integrins, gL dissociates from gH leading to activation of the viral fusion glycoproteins gB and gH. The heterodimer gH/gL targets also host EPHA2 to promote viral entry. This chain is Envelope glycoprotein L, found in Homo sapiens (Human).